The primary structure comprises 346 residues: Magnesium-protoporphyrin IX monomethyl ester [oxidative] cyclase (346 aa).

Belongs to the AcsF family. It depends on Fe cation as a cofactor.

It catalyses the reaction Mg-protoporphyrin IX 13-monomethyl ester + 3 NADPH + 3 O2 + 2 H(+) = 3,8-divinyl protochlorophyllide a + 3 NADP(+) + 5 H2O. The protein operates within porphyrin-containing compound metabolism; chlorophyll biosynthesis (light-independent). In terms of biological role, catalyzes the formation of the isocyclic ring in chlorophyll biosynthesis. Mediates the cyclase reaction, which results in the formation of divinylprotochlorophyllide (Pchlide) characteristic of all chlorophylls from magnesium-protoporphyrin IX 13-monomethyl ester (MgPMME). The polypeptide is Magnesium-protoporphyrin IX monomethyl ester [oxidative] cyclase (Gloeobacter violaceus (strain ATCC 29082 / PCC 7421)).